The primary structure comprises 391 residues: Transaldolase (391 aa).

Residues 1 to 329 (MGKNLLEQLR…RLKVLDGQEH (329 aa)) are transaldolase. The active-site Schiff-base intermediate with substrate is the K136. 2 EF-hand domains span residues 329 to 364 (HIKH…FDAL) and 365 to 387 (DRDH…AFRL). Residues D342, D344, D346, E353, D365, D367, D369, K371, and E376 each coordinate Ca(2+).

Belongs to the transaldolase family. Type 1 subfamily.

It is found in the cytoplasm. It carries out the reaction D-sedoheptulose 7-phosphate + D-glyceraldehyde 3-phosphate = D-erythrose 4-phosphate + beta-D-fructose 6-phosphate. It functions in the pathway carbohydrate degradation; pentose phosphate pathway; D-glyceraldehyde 3-phosphate and beta-D-fructose 6-phosphate from D-ribose 5-phosphate and D-xylulose 5-phosphate (non-oxidative stage): step 2/3. Functionally, transaldolase is important for the balance of metabolites in the pentose-phosphate pathway. The protein is Transaldolase of Synechocystis sp. (strain ATCC 27184 / PCC 6803 / Kazusa).